We begin with the raw amino-acid sequence, 274 residues long: MQGASRESLAAAWREAEELLVRPRPGAQPPEEVGTQLFSVTAILDEHPALRRALSDPAVEPGRKVSLADRLFGERIGETARRLVATVVRARWSRVRDLSDALETLGVLALLVAAERSRAVDDVEDELFRFGRIVASRPELRDALANRTLPVENKVRLVERLLADRAHPVTVALVTQLVRHPRGRTPEEGFADFSGIAARFRQRLVARVTTAVALTDDERSRLRRALSELYGRDVHLHVEVDPRIGGGVVVQLGDEVIDGSIASILAETRQRLAS.

This sequence belongs to the ATPase delta chain family. In terms of assembly, F-type ATPases have 2 components, F(1) - the catalytic core - and F(0) - the membrane proton channel. F(1) has five subunits: alpha(3), beta(3), gamma(1), delta(1), epsilon(1). F(0) has three main subunits: a(1), b(2) and c(10-14). The alpha and beta chains form an alternating ring which encloses part of the gamma chain. F(1) is attached to F(0) by a central stalk formed by the gamma and epsilon chains, while a peripheral stalk is formed by the delta and b chains.

The protein resides in the cell membrane. Its function is as follows. F(1)F(0) ATP synthase produces ATP from ADP in the presence of a proton or sodium gradient. F-type ATPases consist of two structural domains, F(1) containing the extramembraneous catalytic core and F(0) containing the membrane proton channel, linked together by a central stalk and a peripheral stalk. During catalysis, ATP synthesis in the catalytic domain of F(1) is coupled via a rotary mechanism of the central stalk subunits to proton translocation. In terms of biological role, this protein is part of the stalk that links CF(0) to CF(1). It either transmits conformational changes from CF(0) to CF(1) or is implicated in proton conduction. This chain is ATP synthase subunit delta, found in Acidothermus cellulolyticus (strain ATCC 43068 / DSM 8971 / 11B).